Here is a 173-residue protein sequence, read N- to C-terminus: Alpha-crystallin A chain (173 aa).

Methionine 1 is subject to N-acetylmethionine. The interval methionine 1–glutamate 63 is required for complex formation with BFSP1 and BFSP2. At glutamine 6 the chain carries Deamidated glutamine; partial. A Phosphoserine modification is found at serine 45. The residue at position 50 (glutamine 50) is a Deamidated glutamine; partial. In terms of domain architecture, sHSP spans leucine 52–serine 162. The residue at position 70 (lysine 70) is an N6-acetyllysine. Glutamine 90 carries the deamidated glutamine; partial modification. Lysine 99 carries the N6-acetyllysine modification. Residue histidine 100 participates in Zn(2+) binding. Position 101 is a deamidated asparagine; partial (asparagine 101). Zn(2+)-binding residues include glutamate 102 and histidine 107. Residue serine 122 is modified to Phosphoserine. Asparagine 123 bears the Deamidated asparagine; partial mark. A disordered region spans residues proline 144–serine 173. Residues glycine 153–proline 167 show a composition bias toward basic and acidic residues. Histidine 154 contributes to the Zn(2+) binding site. The O-linked (GlcNAc) serine glycan is linked to serine 162.

This sequence belongs to the small heat shock protein (HSP20) family. As to quaternary structure, heteromer composed of three CRYAA and one CRYAB subunits. Inter-subunit bridging via zinc ions enhances stability, which is crucial as there is no protein turn over in the lens. Can also form homodimers and homotetramers (dimers of dimers) which serve as the building blocks of homooligomers. Within homooligomers, the zinc-binding motif is created from residues of 3 different molecules. His-100 and Glu-102 from one molecule are ligands of the zinc ion, and His-107 and His-154 residues from additional molecules complete the site with tetrahedral coordination geometry. Part of a complex required for lens intermediate filament formation composed of BFSP1, BFSP2 and CRYAA. Post-translationally, acetylation at Lys-70 may increase chaperone activity. In terms of processing, undergoes age-dependent proteolytical cleavage at the C-terminus.

It is found in the cytoplasm. It localises to the nucleus. Functionally, contributes to the transparency and refractive index of the lens. Acts as a chaperone, preventing aggregation of various proteins under a wide range of stress conditions. Required for the correct formation of lens intermediate filaments as part of a complex composed of BFSP1, BFSP2 and CRYAA. The chain is Alpha-crystallin A chain (CRYAA) from Balaenoptera acutorostrata (Common minke whale).